The chain runs to 218 residues: Small ribosomal subunit protein uS3c (218 aa).

In terms of domain architecture, KH type-2 spans Ile-47–Ala-118.

Belongs to the universal ribosomal protein uS3 family. Part of the 30S ribosomal subunit.

The protein localises to the plastid. It is found in the chloroplast. This is Small ribosomal subunit protein uS3c (rps3) from Cycas taitungensis (Prince sago).